A 311-amino-acid polypeptide reads, in one-letter code: Homeobox-leucine zipper protein ATHB-6 (311 aa).

Residues Met-1–Ser-10 show a composition bias toward polar residues. Positions Met-1–Gly-32 are disordered. Positions Met-1–Tyr-43 are interaction with ABI1. Residues Leu-59 to Gln-118 constitute a DNA-binding region (homeobox). Residues Leu-119 to Leu-154 are leucine-zipper. The disordered stretch occupies residues Lys-157 to Lys-183. The interaction with ABI1 stretch occupies residues Leu-218–Asn-311.

It belongs to the HD-ZIP homeobox family. Class I subfamily. As to quaternary structure, interacts with ABI1. Phosphorylated by PKA. Reversible inactivation of the binding to DNA by phosphorylation. Widely expressed.

Its subcellular location is the nucleus. Functionally, transcription activator that may act as growth regulators in response to water deficit. Interacts with the core sequence 5'-CAATTATTA-3' of promoters in response to ABA and in an ABI1-dependent manner. Involved in the negative regulation of the ABA signaling pathway. The polypeptide is Homeobox-leucine zipper protein ATHB-6 (ATHB-6) (Arabidopsis thaliana (Mouse-ear cress)).